The sequence spans 565 residues: CTP synthase (565 aa).

The amidoligase domain stretch occupies residues 1–272 (MARPKNVKHI…DLRVMKKLGL (272 aa)). Serine 18 lines the CTP pocket. Residue serine 18 coordinates UTP. An ATP-binding site is contributed by 19-24 (SLGKGI). Tyrosine 59 contributes to the L-glutamine binding site. Aspartate 76 is a binding site for ATP. Mg(2+) contacts are provided by aspartate 76 and glutamate 146. Residues 153–155 (DIE), 193–198 (KTKPTQ), and lysine 229 each bind CTP. Residues 193 to 198 (KTKPTQ) and lysine 229 contribute to the UTP site. Positions 299-543 (TIGVCGKYTE…VQAAKEFAMG (245 aa)) constitute a Glutamine amidotransferase type-1 domain. Position 363 (glycine 363) interacts with L-glutamine. Cysteine 390 (nucleophile; for glutamine hydrolysis) is an active-site residue. Residues 391–394 (LGMQ), glutamate 414, and arginine 471 contribute to the L-glutamine site. Catalysis depends on residues histidine 516 and glutamate 518.

This sequence belongs to the CTP synthase family. In terms of assembly, homotetramer.

The catalysed reaction is UTP + L-glutamine + ATP + H2O = CTP + L-glutamate + ADP + phosphate + 2 H(+). It catalyses the reaction L-glutamine + H2O = L-glutamate + NH4(+). The enzyme catalyses UTP + NH4(+) + ATP = CTP + ADP + phosphate + 2 H(+). Its pathway is pyrimidine metabolism; CTP biosynthesis via de novo pathway; CTP from UDP: step 2/2. Allosterically activated by GTP, when glutamine is the substrate; GTP has no effect on the reaction when ammonia is the substrate. The allosteric effector GTP functions by stabilizing the protein conformation that binds the tetrahedral intermediate(s) formed during glutamine hydrolysis. Inhibited by the product CTP, via allosteric rather than competitive inhibition. In terms of biological role, catalyzes the ATP-dependent amination of UTP to CTP with either L-glutamine or ammonia as the source of nitrogen. Regulates intracellular CTP levels through interactions with the four ribonucleotide triphosphates. In Chlorobaculum parvum (strain DSM 263 / NCIMB 8327) (Chlorobium vibrioforme subsp. thiosulfatophilum), this protein is CTP synthase.